Here is a 117-residue protein sequence, read N- to C-terminus: MSKQPRKQRKALYTAPLHKRHNSMSVHLSDDLKEEFNRRSFPVRKGDSVEIVRGDFRGTEGKVEGVDLKNYRVLVDGASSQKQDGSKLYQPIHPSNLVLTEIYLDDERRNQALNRKV.

Residues 1 to 10 (MSKQPRKQRK) show a composition bias toward basic residues. The interval 1–28 (MSKQPRKQRKALYTAPLHKRHNSMSVHL) is disordered.

It belongs to the universal ribosomal protein uL24 family. As to quaternary structure, part of the 50S ribosomal subunit.

Its function is as follows. One of two assembly initiator proteins, it binds directly to the 5'-end of the 23S rRNA, where it nucleates assembly of the 50S subunit. In terms of biological role, located at the polypeptide exit tunnel on the outside of the subunit. This is Large ribosomal subunit protein uL24 from Methanosphaera stadtmanae (strain ATCC 43021 / DSM 3091 / JCM 11832 / MCB-3).